The chain runs to 428 residues: 3-phosphoshikimate 1-carboxyvinyltransferase (428 aa).

Residues Lys-23, Ser-24, and Arg-28 each coordinate 3-phosphoshikimate. Lys-23 contacts phosphoenolpyruvate. The phosphoenolpyruvate site is built by Gly-97 and Arg-125. Positions 170, 171, 172, 198, 314, 337, and 341 each coordinate 3-phosphoshikimate. Gln-172 contributes to the phosphoenolpyruvate binding site. The Proton acceptor role is filled by Asp-314. Phosphoenolpyruvate-binding residues include Arg-345, Arg-387, and Lys-412.

The protein belongs to the EPSP synthase family. As to quaternary structure, monomer.

Its subcellular location is the cytoplasm. It catalyses the reaction 3-phosphoshikimate + phosphoenolpyruvate = 5-O-(1-carboxyvinyl)-3-phosphoshikimate + phosphate. The protein operates within metabolic intermediate biosynthesis; chorismate biosynthesis; chorismate from D-erythrose 4-phosphate and phosphoenolpyruvate: step 6/7. Functionally, catalyzes the transfer of the enolpyruvyl moiety of phosphoenolpyruvate (PEP) to the 5-hydroxyl of shikimate-3-phosphate (S3P) to produce enolpyruvyl shikimate-3-phosphate and inorganic phosphate. The protein is 3-phosphoshikimate 1-carboxyvinyltransferase of Yersinia pseudotuberculosis serotype IB (strain PB1/+).